The sequence spans 140 residues: Cystatin-C (140 aa).

Residues 1 to 20 (MASPLRSLLFLLAVLAVAWA) form the signal peptide. The Secondary area of contact motif lies at 75 to 79 (QLVAG). 2 disulfide bridges follow: Cys93/Cys103 and Cys117/Cys137.

Belongs to the cystatin family.

It is found in the secreted. Functionally, as an inhibitor of cysteine proteinases, this protein is thought to serve an important physiological role as a local regulator of this enzyme activity. The polypeptide is Cystatin-C (Cst3) (Mus musculus (Mouse)).